The primary structure comprises 360 residues: tRNA-specific 2-thiouridylase MnmA (360 aa).

Residues 9 to 16 and leucine 35 contribute to the ATP site; that span reads AMSGGVDS. Cysteine 104 functions as the Nucleophile in the catalytic mechanism. Cysteines 104 and 197 form a disulfide. Glycine 128 provides a ligand contact to ATP. Positions 147-149 are interaction with tRNA; it reads KDQ. Cysteine 197 (cysteine persulfide intermediate) is an active-site residue.

It belongs to the MnmA/TRMU family.

Its subcellular location is the cytoplasm. The catalysed reaction is S-sulfanyl-L-cysteinyl-[protein] + uridine(34) in tRNA + AH2 + ATP = 2-thiouridine(34) in tRNA + L-cysteinyl-[protein] + A + AMP + diphosphate + H(+). In terms of biological role, catalyzes the 2-thiolation of uridine at the wobble position (U34) of tRNA, leading to the formation of s(2)U34. This chain is tRNA-specific 2-thiouridylase MnmA, found in Salinispora arenicola (strain CNS-205).